Consider the following 345-residue polypeptide: Phosphoribosylformylglycinamidine cyclo-ligase (345 aa).

This sequence belongs to the AIR synthase family.

The protein localises to the cytoplasm. The enzyme catalyses 2-formamido-N(1)-(5-O-phospho-beta-D-ribosyl)acetamidine + ATP = 5-amino-1-(5-phospho-beta-D-ribosyl)imidazole + ADP + phosphate + H(+). Its pathway is purine metabolism; IMP biosynthesis via de novo pathway; 5-amino-1-(5-phospho-D-ribosyl)imidazole from N(2)-formyl-N(1)-(5-phospho-D-ribosyl)glycinamide: step 2/2. This Escherichia coli O127:H6 (strain E2348/69 / EPEC) protein is Phosphoribosylformylglycinamidine cyclo-ligase.